A 416-amino-acid polypeptide reads, in one-letter code: Vacuole membrane protein KMS1 (416 aa).

Gly2 carries the N-acetylglycine modification. At Gly2 to His60 the chain is on the cytoplasmic side. Residues Gly61 to Val81 traverse the membrane as a helical segment. Topologically, residues Asp82–Trp101 are lumenal. A helical membrane pass occupies residues Trp102 to Leu124. The Cytoplasmic portion of the chain corresponds to Gly125–Asn257. A helical transmembrane segment spans residues Phe258–Met278. The Lumenal segment spans residues Cys279–Phe289. A helical membrane pass occupies residues Phe290 to Val312. Residues Cys313–Asn323 are Cytoplasmic-facing. The chain crosses the membrane as a helical span at residues Glu324–Ala344. Topologically, residues Lys345 to Ser372 are lumenal. A helical transmembrane segment spans residues Phe373–Val393. At Thr394–Asp416 the chain is on the cytoplasmic side.

Belongs to the VMP1 family.

Its subcellular location is the endoplasmic reticulum membrane. Functionally, involved in the early secretory pathway. Required for the correct export of secretory products from the endoplasmic reticulum (ER) and involved in the maintenance of ER integrity. In Arabidopsis thaliana (Mouse-ear cress), this protein is Vacuole membrane protein KMS1.